The following is a 484-amino-acid chain: Probable sphingolipid transporter spinster homolog 2 (484 aa).

The interval 1–23 (MDVDGEGDRGQNPRIMERDSDSI) is disordered. Residues 38-58 (LLFVFCVVNLINYIDRGAIAS) form a helical membrane-spanning segment. N-linked (GlcNAc...) asparagine glycosylation is found at Asn62 and Asn85. The next 11 helical transmembrane spans lie at 93–113 (VLSS…ASLA), 122–142 (IGVG…SFDF), 147–167 (ICRM…APFI), 181–201 (AVFY…GGVV), 209–229 (AAFW…FVIK), 273–293 (VYVT…AYSY), 311–331 (IFGG…GVIL), 345–362 (LSVS…AFCF), 377–397 (LLVF…VKPS), 405–425 (MSTV…VGVL), and 436–456 (SLVL…GIFL). Residue Ser466 is modified to Phosphoserine.

It belongs to the major facilitator superfamily. Spinster (TC 2.A.1.49) family.

The protein localises to the late endosome membrane. It localises to the lysosome membrane. Its function is as follows. Probable sphingolipid transporter that plays a central role in endosomes and/or lysosomes storage. The protein is Probable sphingolipid transporter spinster homolog 2 of Arabidopsis thaliana (Mouse-ear cress).